The sequence spans 138 residues: Large ribosomal subunit protein mL54 (138 aa).

A mitochondrion-targeting transit peptide spans 1 to 16 (MAARRLFGATGSWARW).

This sequence belongs to the mitochondrion-specific ribosomal protein mL54 family. As to quaternary structure, component of the mitochondrial ribosome large subunit (39S) which comprises a 16S rRNA and about 50 distinct proteins.

It localises to the mitochondrion. This is Large ribosomal subunit protein mL54 (MRPL54) from Bos taurus (Bovine).